We begin with the raw amino-acid sequence, 438 residues long: Aspartate--tRNA(Asp/Asn) ligase (438 aa).

Residue Glu176 coordinates L-aspartate. An aspartate region spans residues 198 to 201 (QLYK). Residue Arg220 participates in L-aspartate binding. ATP is bound by residues 220–222 (RAE), 228–230 (RHL), and Glu361. The Mg(2+) site is built by Glu361 and Ser364. Residues Ser364 and Arg368 each contribute to the L-aspartate site. 409–412 (GADR) serves as a coordination point for ATP.

The protein belongs to the class-II aminoacyl-tRNA synthetase family. Type 2 subfamily. As to quaternary structure, homodimer. Requires Mg(2+) as cofactor.

It is found in the cytoplasm. It carries out the reaction tRNA(Asx) + L-aspartate + ATP = L-aspartyl-tRNA(Asx) + AMP + diphosphate. In terms of biological role, aspartyl-tRNA synthetase with relaxed tRNA specificity since it is able to aspartylate not only its cognate tRNA(Asp) but also tRNA(Asn). Reaction proceeds in two steps: L-aspartate is first activated by ATP to form Asp-AMP and then transferred to the acceptor end of tRNA(Asp/Asn). This is Aspartate--tRNA(Asp/Asn) ligase from Methanococcus maripaludis (strain C6 / ATCC BAA-1332).